The chain runs to 83 residues: Defensin-like protein 47 (83 aa).

Positions 1 to 27 (MGSTKTLVTCFLVIILAVSLPNNNVLA) are cleaved as a signal peptide. Intrachain disulfides connect cysteine 40-cysteine 81, cysteine 44-cysteine 68, cysteine 53-cysteine 79, and cysteine 57-cysteine 80.

The protein belongs to the DEFL family.

It is found in the secreted. The polypeptide is Defensin-like protein 47 (Arabidopsis thaliana (Mouse-ear cress)).